We begin with the raw amino-acid sequence, 284 residues long: N-methyltransferase sirN (284 aa).

The protein belongs to the methyltransferase superfamily. LaeA methyltransferase family.

Its pathway is mycotoxin biosynthesis. In terms of biological role, N-methyltransferase; part of the gene cluster that mediates the biosynthesis of sirodesmin PL, an epipolythiodioxopiperazine (ETP) characterized by a disulfide bridged cyclic dipeptide and that acts as a phytotoxin which is involved in the blackleg didease of canola. SirD catalyzes the O-prenylation of L-tyrosine (L-Tyr) in the presence of dimethylallyl diphosphate (DMAPP) to yield 4-O-dimethylallyl-L-Tyr, and therefore represents probably the first pathway-specific enzyme in the biosynthesis of sirodesmin PL. 4-O-dimethylallyl-L-Tyr, then undergoes condensation with L-Ser in a reaction catalyzed by the non-ribosomal peptide synthase sirP to form the diketopiperazine (DKP) backbone. Further bishydroxylation of the DKP performed by the cytochrome P450 monooxygenase sirC leads to the production of the intermediate phomamide. This step is essential to form the reactive thiol group required for toxicity of sirodesmin PL. The next steps of sirodesmin biosynthesis are not well understood yet but some predictions could be made from intermediate compounds identification. Phomamide is converted into phomalizarine via oxidation, probably by sirT. Further oxidation, methylation (by sirM or sirN) and reduction steps convert phomalizarine to deacetyl sirodesmin. Finally, acetyltransferase sirH probably acetylates deacetyl sirodesmin to produce sirodesmin PL. This Leptosphaeria maculans (Blackleg fungus) protein is N-methyltransferase sirN.